A 472-amino-acid polypeptide reads, in one-letter code: UDP-glucosyltransferase 103 (472 aa).

His15 functions as the Proton acceptor in the catalytic mechanism. An anthocyanidin is bound at residue His15. Asp117 functions as the Charge relay in the catalytic mechanism. UDP-alpha-D-glucose is bound by residues Ala344, Gln346, His361, Trp364, Asn365, Ser366, and Glu369. Residue Gly384 participates in an anthocyanidin binding. Residues Glu385 and Gln386 each contribute to the UDP-alpha-D-glucose site.

Belongs to the UDP-glycosyltransferase family.

The enzyme catalyses (20S)-ginsenoside F1 + UDP-alpha-D-glucose = (20S)-ginsenoside Rg1 + UDP + H(+). Its pathway is secondary metabolite biosynthesis; terpenoid biosynthesis. In terms of biological role, probable component of the triterpene saponins (e.g. ginsenosides) biosynthetic pathway. No detectable activity toward protopanaxatriol (PPT). The chain is UDP-glucosyltransferase 103 from Panax ginseng (Korean ginseng).